We begin with the raw amino-acid sequence, 142 residues long: Large ribosomal subunit protein uL13 (142 aa).

Belongs to the universal ribosomal protein uL13 family. In terms of assembly, part of the 50S ribosomal subunit.

This protein is one of the early assembly proteins of the 50S ribosomal subunit, although it is not seen to bind rRNA by itself. It is important during the early stages of 50S assembly. This chain is Large ribosomal subunit protein uL13, found in Ralstonia pickettii (strain 12J).